The sequence spans 103 residues: uncharacterized protein (103 aa).

A signal peptide spans 1 to 22 (MFRPFLNSLMLGSLFFPFIAIA).

This sequence to the N-terminal of the FimA/PapA family of fimbria proteins.

This is an uncharacterized protein from Escherichia coli (strain K12).